A 127-amino-acid polypeptide reads, in one-letter code: Fluoride-specific ion channel FluC (127 aa).

The next 4 helical transmembrane spans lie at 1 to 21 (MPQGLALYCFIAAGGATGACL), 39 to 59 (FGTLTVNVVGSFALALLYGVI), 72 to 92 (LIGVGLLGAFTTFSTFSVETL), and 105 to 125 (ANVFLNVGACLLAGWLAIELM). Gly79 and Thr82 together coordinate Na(+).

This sequence belongs to the fluoride channel Fluc/FEX (TC 1.A.43) family.

It localises to the cell inner membrane. It catalyses the reaction fluoride(in) = fluoride(out). Its activity is regulated as follows. Na(+) is not transported, but it plays an essential structural role and its presence is essential for fluoride channel function. In terms of biological role, fluoride-specific ion channel. Important for reducing fluoride concentration in the cell, thus reducing its toxicity. This is Fluoride-specific ion channel FluC from Alteromonas mediterranea (strain DSM 17117 / CIP 110805 / LMG 28347 / Deep ecotype).